A 108-amino-acid chain; its full sequence is UPF0145 protein LCABL_07110 (108 aa).

It belongs to the UPF0145 family.

In Lacticaseibacillus casei (strain BL23) (Lactobacillus casei), this protein is UPF0145 protein LCABL_07110.